Reading from the N-terminus, the 830-residue chain is Cyclin-dependent kinase inhibitor FAR1 (830 aa).

The tract at residues 1-31 is disordered; the sequence is MKTPTRVSFEKKIHTPPSGDRDAERSPPKKF. Positions 8-27 are enriched in basic and acidic residues; the sequence is SFEKKIHTPPSGDRDAERSP. S87 is subject to Phosphoserine; by CDC28. Phosphoserine is present on residues S110 and S114. The segment at 202–252 adopts an RING-type zinc-finger fold; sequence CLICEESISSTFTGEKVVESTCSHTSHYNCYLMLFETLYFQGKFPECKICG. T306 bears the Phosphothreonine mark.

Associates with the CDC28-CLN complex. In terms of processing, thought to be phosphorylated by MAP kinase FUS3. Thought to enhance the binding of FAR1 to G1-specific cyclin-dependent kinase (CDK) complexes.

Inhibitor of the cyclin-dependent kinase CDC28. Necessary for cell cycle arrest. Involved in pheromone response. Contributes to mating efficiency. Required for oriented polarization of yeast cells in response to mating pheromones. In Saccharomyces cerevisiae (strain ATCC 204508 / S288c) (Baker's yeast), this protein is Cyclin-dependent kinase inhibitor FAR1 (FAR1).